A 184-amino-acid chain; its full sequence is Shikimate kinase (184 aa).

ATP is bound at residue 18 to 23 (GAGKTT). A Mg(2+)-binding site is contributed by T22. Positions 40, 64, and 86 each coordinate substrate. ATP is bound at residue R124. A substrate-binding site is contributed by R143. An ATP-binding site is contributed by Q160.

The protein belongs to the shikimate kinase family. As to quaternary structure, monomer. Mg(2+) serves as cofactor.

It is found in the cytoplasm. It catalyses the reaction shikimate + ATP = 3-phosphoshikimate + ADP + H(+). The protein operates within metabolic intermediate biosynthesis; chorismate biosynthesis; chorismate from D-erythrose 4-phosphate and phosphoenolpyruvate: step 5/7. Catalyzes the specific phosphorylation of the 3-hydroxyl group of shikimic acid using ATP as a cosubstrate. The protein is Shikimate kinase of Chromobacterium violaceum (strain ATCC 12472 / DSM 30191 / JCM 1249 / CCUG 213 / NBRC 12614 / NCIMB 9131 / NCTC 9757 / MK).